Consider the following 247-residue polypeptide: 2,3-bisphosphoglycerate-dependent phosphoglycerate mutase (247 aa).

Substrate contacts are provided by residues 8–15, 21–22, R60, 87–90, K98, 114–115, and 183–184; these read RHGESQWN, TG, ERHY, RR, and GN. H9 serves as the catalytic Tele-phosphohistidine intermediate. E87 serves as the catalytic Proton donor/acceptor.

The protein belongs to the phosphoglycerate mutase family. BPG-dependent PGAM subfamily.

It carries out the reaction (2R)-2-phosphoglycerate = (2R)-3-phosphoglycerate. It functions in the pathway carbohydrate degradation; glycolysis; pyruvate from D-glyceraldehyde 3-phosphate: step 3/5. In terms of biological role, catalyzes the interconversion of 2-phosphoglycerate and 3-phosphoglycerate. This Chlorobium phaeobacteroides (strain DSM 266 / SMG 266 / 2430) protein is 2,3-bisphosphoglycerate-dependent phosphoglycerate mutase.